A 682-amino-acid polypeptide reads, in one-letter code: MSRKQLALFEPTLVVQALKEAVKKLNPQAQWRNPVMFIVWIGSLLTTCISIAMASGAMPGNALFSAAISGWLWVTVLFANFAEALAEGRSKAQANSLKGVKKTAFARKLREPKYGAAADKVPADQLRKGDIVLVEAGDIIPCDGEVIEGGASVDESAITGESAPVIRESGGDFASVTGGTRILSDWLVIECSVNPGETFLDRMIAMVEGAQRRKTPNEIALTILLIALTIVFLLATATLWPFSAWGGNAVSVTVLVALLVCLIPTTIGGLLSAIGVAGMSRMLGANVIATSGRAVEAAGDVDVLLLDKTGTITLGNRQASEFIPAQGVDEKTLADAAQLASLADETPEGRSIVILAKQRFNLRERDVQSLHATFVPFTAQSRMSGINIDNRMIRKGSVDAIRRHVEANGGHFPADVDQKVDQVARQGATPLVVVEGSRVLGVIALKDIVKGGIKERFAQLRKMGIKTVMITGDNRLTAAAIAAEAGVDDFLAEATPEAKLALIRQYQAEGRLVAMTGDGTNDAPALAQADIAVAMNSGTQAAKEAGNMVDLDSNPTKLIEVVHIGKQMLMTRGSLTTFSITNDVAKYFAIIPAAFAATYPQLNALNIMRLHSPDSAILSAVIFNALIIVFLIPLALKGVSYKPLTASAMLRRNLWIYGLGGLLVPFIGIKVIDLLLTVCGLV.

4 helical membrane passes run 34–54 (PVMF…IAMA), 62–82 (ALFS…ANFA), 219–239 (IALT…TATL), and 254–274 (VLVA…LSAI). The active-site 4-aspartylphosphate intermediate is the Asp-307. Residues Asp-344, Glu-348, 377–384 (FTAQSRMS), and Lys-395 contribute to the ATP site. Residues Asp-518 and Asp-522 each coordinate Mg(2+). Transmembrane regions (helical) follow at residues 588–608 (FAII…LNIM), 616–636 (AILS…PLAL), and 656–676 (IYGL…DLLL).

It belongs to the cation transport ATPase (P-type) (TC 3.A.3) family. Type IA subfamily. The system is composed of three essential subunits: KdpA, KdpB and KdpC.

It localises to the cell inner membrane. It carries out the reaction K(+)(out) + ATP + H2O = K(+)(in) + ADP + phosphate + H(+). Part of the high-affinity ATP-driven potassium transport (or Kdp) system, which catalyzes the hydrolysis of ATP coupled with the electrogenic transport of potassium into the cytoplasm. This subunit is responsible for energy coupling to the transport system and for the release of the potassium ions to the cytoplasm. The chain is Potassium-transporting ATPase ATP-binding subunit from Shigella boydii serotype 4 (strain Sb227).